The sequence spans 150 residues: 3-hydroxyacyl-[acyl-carrier-protein] dehydratase FabZ (150 aa).

Histidine 51 is a catalytic residue.

Belongs to the thioester dehydratase family. FabZ subfamily.

Its subcellular location is the cytoplasm. The catalysed reaction is a (3R)-hydroxyacyl-[ACP] = a (2E)-enoyl-[ACP] + H2O. Its function is as follows. Involved in unsaturated fatty acids biosynthesis. Catalyzes the dehydration of short chain beta-hydroxyacyl-ACPs and long chain saturated and unsaturated beta-hydroxyacyl-ACPs. In Rubrobacter xylanophilus (strain DSM 9941 / JCM 11954 / NBRC 16129 / PRD-1), this protein is 3-hydroxyacyl-[acyl-carrier-protein] dehydratase FabZ.